The chain runs to 568 residues: PCNA-interacting partner (568 aa).

The interval 442-555 (QIPTCVHPAP…RNNKAVSKKL (114 aa)) is disordered. The segment covering 488–500 (NAWNQTGGKSTQP) has biased composition (polar residues). The span at 515-527 (ANRECTEQGREEN) shows a compositional bias: basic and acidic residues.

Belongs to the PARI family.

The protein resides in the cytoplasm. It localises to the nucleus. Its function is as follows. Required to suppress inappropriate homologous recombination, thereby playing a central role DNA repair and in the maintenance of genomic stability. This chain is PCNA-interacting partner (parpbp), found in Danio rerio (Zebrafish).